The following is a 595-amino-acid chain: Beta-(1--&gt;2)glucan export ATP-binding/permease protein NdvA (595 aa).

The next 5 membrane-spanning stretches (helical) occupy residues 21-41 (FLLI…EPIL), 56-76 (LVTL…YVLV), 129-149 (IWLE…VLVP), 158-178 (LSIV…LVMQ), and 252-272 (ISIV…QLSV). Residues 21–301 (FLLICTANIT…ISGFINLAVS (281 aa)) enclose the ABC transmembrane type-1 domain. Residues 335–569 (IQFHHVTYEF…DGHFYKLLKA (235 aa)) enclose the ABC transporter domain. 368-375 (GPTGAGKT) is an ATP binding site.

The protein belongs to the ABC transporter superfamily. Beta-(1--&gt;2)glucan exporter (TC 3.A.1.108.1) family. In terms of assembly, homodimer.

Its subcellular location is the cell inner membrane. It carries out the reaction [(1-&gt;2)-beta-D-glucosyl](n)(in) + ATP + H2O = [(1-&gt;2)-beta-D-glucosyl](n)(out) + ADP + phosphate + H(+). Its function is as follows. Involved in beta-(1--&gt;2)glucan export. Transmembrane domains (TMD) form a pore in the inner membrane and the ATP-binding domain (NBD) is responsible for energy generation. The chain is Beta-(1--&gt;2)glucan export ATP-binding/permease protein NdvA from Bartonella bacilliformis (strain ATCC 35685 / KC583 / Herrer 020/F12,63).